The following is a 67-amino-acid chain: Protein Tpau_2998 (67 aa).

The polypeptide is Protein Tpau_2998 (Tsukamurella paurometabola (strain ATCC 8368 / DSM 20162 / CCUG 35730 / CIP 100753 / JCM 10117 / KCTC 9821 / NBRC 16120 / NCIMB 702349 / NCTC 13040) (Corynebacterium paurometabolum)).